The primary structure comprises 384 residues: Autophagy-related protein 30 (384 aa).

The segment at Met-1–Thr-63 is disordered. Residues Glu-13–Asn-27 show a composition bias toward low complexity. Residues Arg-45–Thr-63 are compositionally biased toward polar residues. The residue at position 112 (Ser-112) is a Phosphoserine. Residues Val-266–Gln-291 are disordered. Residues Tyr-278–Gln-291 show a composition bias toward polar residues.

As to quaternary structure, interacts with ATG11, ATG17, ATG37, PEX3 and PEX14. In terms of processing, phosphorylation at Ser-112 is required for micro- and macropexophagy.

It is found in the vacuole lumen. The protein resides in the preautophagosomal structure. The protein localises to the peroxisome membrane. Functionally, acts as the peroxisome receptor for pexophagy. Required for both micropexophagy and macropexophagy, but not for the cytoplasm to vacuole transport (Cvt) or autophagy pathways. Required for functional micropexophagic apparatus (MIPA) and relocation of ATG11 to the peroxisome-sequestering arms of the vacuole. The protein is Autophagy-related protein 30 (ATG30) of Komagataella phaffii (strain GS115 / ATCC 20864) (Yeast).